The chain runs to 152 residues: Deoxyuridine 5'-triphosphate nucleotidohydrolase (152 aa).

Substrate-binding positions include 71–73 (RSG), Asn84, and 88–90 (TVD).

This sequence belongs to the dUTPase family. Mg(2+) serves as cofactor.

The enzyme catalyses dUTP + H2O = dUMP + diphosphate + H(+). The protein operates within pyrimidine metabolism; dUMP biosynthesis; dUMP from dCTP (dUTP route): step 2/2. Its function is as follows. This enzyme is involved in nucleotide metabolism: it produces dUMP, the immediate precursor of thymidine nucleotides and it decreases the intracellular concentration of dUTP so that uracil cannot be incorporated into DNA. This chain is Deoxyuridine 5'-triphosphate nucleotidohydrolase, found in Maricaulis maris (strain MCS10) (Caulobacter maris).